The sequence spans 258 residues: Type III pantothenate kinase (258 aa).

Residue 7–14 (DVGNTRLK) participates in ATP binding. Substrate-binding positions include Tyr96 and 103–106 (GADR). Catalysis depends on Asp105, which acts as the Proton acceptor. Thr133 is a binding site for ATP. Thr183 is a substrate binding site.

This sequence belongs to the type III pantothenate kinase family. In terms of assembly, homodimer. NH4(+) serves as cofactor. The cofactor is K(+).

It is found in the cytoplasm. It catalyses the reaction (R)-pantothenate + ATP = (R)-4'-phosphopantothenate + ADP + H(+). It participates in cofactor biosynthesis; coenzyme A biosynthesis; CoA from (R)-pantothenate: step 1/5. Its function is as follows. Catalyzes the phosphorylation of pantothenate (Pan), the first step in CoA biosynthesis. The protein is Type III pantothenate kinase of Acidovorax ebreus (strain TPSY) (Diaphorobacter sp. (strain TPSY)).